The chain runs to 686 residues: tRNA (guanine(37)-N(1))-methyltransferase (686 aa).

The interval 206-244 (GGPSSVSLTEDTDGSEQPQGLPRAAAAPPPPSNKRRASY) is disordered. Residues histidine 428, 466–467 (DL), 495–496 (DG), and asparagine 530 each bind S-adenosyl-L-methionine.

It belongs to the class I-like SAM-binding methyltransferase superfamily. TRM5/TYW2 family. Monomer.

It is found in the mitochondrion matrix. It localises to the nucleus. The protein resides in the cytoplasm. The catalysed reaction is guanosine(37) in tRNA + S-adenosyl-L-methionine = N(1)-methylguanosine(37) in tRNA + S-adenosyl-L-homocysteine + H(+). Specifically methylates the N1 position of guanosine-37 in various cytoplasmic and mitochondrial tRNAs. Methylation is not dependent on the nature of the nucleoside 5' of the target nucleoside. This is the first step in the biosynthesis of wybutosine (yW), a modified base adjacent to the anticodon of tRNAs and required for accurate decoding. The polypeptide is tRNA (guanine(37)-N(1))-methyltransferase (Leishmania major).